Reading from the N-terminus, the 528-residue chain is Na(+)/H(+) antiporter NhaB (528 aa).

10 helical membrane-spanning segments follow: residues 11–31 (VNFLGNSPKWYKLAILSFLVI), 67–87 (PGGLLAIQAVAIGMTSPSQVL), 98–118 (LLLIFMVAGIYFMKQLLLFVF), 140–160 (AFLSAFLDALTVIAVIIAVGI), 240–260 (FFIRMSPVTIPVLLSGLLTCV), 311–331 (LVAGLALHLASVGLIGLSVII), 350–370 (EEALPFTALLAVFFAIVGVII), 391–411 (LVVFFIANGVLSMVSDNVFVG), 449–469 (ATPNGQAAFLFLLTSALAPLI), and 476–496 (MVIMALPYTLVLSIVGIVTIE).

The protein belongs to the NhaB Na(+)/H(+) (TC 2.A.34) antiporter family.

Its subcellular location is the cell inner membrane. The catalysed reaction is 2 Na(+)(in) + 3 H(+)(out) = 2 Na(+)(out) + 3 H(+)(in). Functionally, na(+)/H(+) antiporter that extrudes sodium in exchange for external protons. The polypeptide is Na(+)/H(+) antiporter NhaB (Shewanella denitrificans (strain OS217 / ATCC BAA-1090 / DSM 15013)).